The sequence spans 87 residues: Small ribosomal subunit protein bS20 (87 aa).

Belongs to the bacterial ribosomal protein bS20 family.

Its function is as follows. Binds directly to 16S ribosomal RNA. This is Small ribosomal subunit protein bS20 from Halothermothrix orenii (strain H 168 / OCM 544 / DSM 9562).